The following is a 366-amino-acid chain: Protein FAM110B (366 aa).

3 disordered regions span residues 127 to 152 (SSEGSSSGSGHKHSSRNWPPHRDTTD), 163 to 182 (KVYPTPGHGSPQESSSHVSR), and 216 to 252 (CSSSAPPLPPKPKVAAMKSPEADQVEPACGVSRRPSL). Phosphoserine occurs at positions 234 and 297. Residues 313 to 333 (DCEQSQDSNSDLRNDDSANDR) are disordered. Positions 322–331 (SDLRNDDSAN) are enriched in basic and acidic residues.

This sequence belongs to the FAM110 family.

Its subcellular location is the cytoplasm. It localises to the cytoskeleton. The protein resides in the microtubule organizing center. It is found in the centrosome. The polypeptide is Protein FAM110B (Fam110b) (Mus musculus (Mouse)).